The sequence spans 253 residues: Protein C1orf43 homolog (253 aa).

A helical transmembrane segment spans residues 11-31 (VNVVLVMAYGSLVFVLLFIFV).

It is found in the membrane. Its subcellular location is the golgi apparatus. The protein localises to the mitochondrion. In terms of biological role, general regulator of phagocytosis. Required to uptake Gram negative bacterium by macrophages. In Mus musculus (Mouse), this protein is Protein C1orf43 homolog.